A 309-amino-acid chain; its full sequence is Phosphoserine phosphatase (309 aa).

Asp-97 functions as the Nucleophile in the catalytic mechanism. Mg(2+)-binding residues include Asp-97 and Asp-99. Asp-99 (proton donor) is an active-site residue. Residues Glu-106, Arg-142, Ser-186 to Gly-187, and Lys-232 each bind substrate. Residue Asp-255 coordinates Mg(2+). Position 258 (Asn-258) interacts with substrate.

The protein belongs to the HAD-like hydrolase superfamily. SerB family. It depends on Mg(2+) as a cofactor.

It carries out the reaction O-phospho-L-serine + H2O = L-serine + phosphate. The enzyme catalyses O-phospho-D-serine + H2O = D-serine + phosphate. Its pathway is amino-acid biosynthesis; L-serine biosynthesis; L-serine from 3-phospho-D-glycerate: step 3/3. This chain is Phosphoserine phosphatase (SER2), found in Saccharomyces cerevisiae (strain ATCC 204508 / S288c) (Baker's yeast).